Reading from the N-terminus, the 232-residue chain is Large ribosomal subunit protein uL1 (232 aa).

Belongs to the universal ribosomal protein uL1 family. In terms of assembly, part of the 50S ribosomal subunit.

Its function is as follows. Binds directly to 23S rRNA. The L1 stalk is quite mobile in the ribosome, and is involved in E site tRNA release. In terms of biological role, protein L1 is also a translational repressor protein, it controls the translation of the L11 operon by binding to its mRNA. The chain is Large ribosomal subunit protein uL1 from Chelativorans sp. (strain BNC1).